The following is a 283-amino-acid chain: Protease HtpX homolog (283 aa).

The next 2 membrane-spanning stretches (helical) occupy residues 7–27 (TAVLMAAITALFMAIGSVLGG) and 29–49 (QGMAIALVVALGMNFFSYWFS). H131 contributes to the Zn(2+) binding site. E132 is an active-site residue. Residue H135 participates in Zn(2+) binding. 2 helical membrane passes run 146–166 (ISATMAGAISMLANFAMFFGG) and 177–197 (IAGILVMLLAPLAASLIQMAI). Position 202 (E202) interacts with Zn(2+).

The protein belongs to the peptidase M48B family. Zn(2+) serves as cofactor.

It is found in the cell inner membrane. This is Protease HtpX homolog from Methylibium petroleiphilum (strain ATCC BAA-1232 / LMG 22953 / PM1).